A 247-amino-acid chain; its full sequence is Phosphoribosylaminoimidazole-succinocarboxamide synthase (247 aa).

It belongs to the SAICAR synthetase family.

It carries out the reaction 5-amino-1-(5-phospho-D-ribosyl)imidazole-4-carboxylate + L-aspartate + ATP = (2S)-2-[5-amino-1-(5-phospho-beta-D-ribosyl)imidazole-4-carboxamido]succinate + ADP + phosphate + 2 H(+). The protein operates within purine metabolism; IMP biosynthesis via de novo pathway; 5-amino-1-(5-phospho-D-ribosyl)imidazole-4-carboxamide from 5-amino-1-(5-phospho-D-ribosyl)imidazole-4-carboxylate: step 1/2. In Synechococcus sp. (strain JA-2-3B'a(2-13)) (Cyanobacteria bacterium Yellowstone B-Prime), this protein is Phosphoribosylaminoimidazole-succinocarboxamide synthase.